The sequence spans 137 residues: Small ribosomal subunit protein uS12 (137 aa).

A disordered region spans residues M1 to K57. A 3-methylthioaspartic acid modification is found at D102.

The protein belongs to the universal ribosomal protein uS12 family. In terms of assembly, part of the 30S ribosomal subunit. Contacts proteins S8 and S17. May interact with IF1 in the 30S initiation complex.

Its function is as follows. With S4 and S5 plays an important role in translational accuracy. Interacts with and stabilizes bases of the 16S rRNA that are involved in tRNA selection in the A site and with the mRNA backbone. Located at the interface of the 30S and 50S subunits, it traverses the body of the 30S subunit contacting proteins on the other side and probably holding the rRNA structure together. The combined cluster of proteins S8, S12 and S17 appears to hold together the shoulder and platform of the 30S subunit. The protein is Small ribosomal subunit protein uS12 of Streptococcus pneumoniae (strain Hungary19A-6).